A 394-amino-acid chain; its full sequence is Lipase 3 (394 aa).

Positions 1-20 (MTRGALKVTILLVGLGLVLA) are cleaved as a signal peptide. A glycan (N-linked (GlcNAc...) asparagine) is linked at asparagine 131. Catalysis depends on charge relay system residues serine 164 and histidine 369.

Belongs to the AB hydrolase superfamily. Lipase family. In terms of tissue distribution, fat body.

This chain is Lipase 3 (Lip3), found in Drosophila melanogaster (Fruit fly).